A 242-amino-acid polypeptide reads, in one-letter code: DNA repair protein RecO (242 aa).

Belongs to the RecO family.

In terms of biological role, involved in DNA repair and RecF pathway recombination. The chain is DNA repair protein RecO from Laribacter hongkongensis (strain HLHK9).